The sequence spans 80 residues: NAD(P)H-quinone oxidoreductase subunit O (80 aa).

The protein belongs to the complex I NdhO subunit family. In terms of assembly, NDH-1 can be composed of about 15 different subunits; different subcomplexes with different compositions have been identified which probably have different functions.

The protein localises to the cellular thylakoid membrane. The enzyme catalyses a plastoquinone + NADH + (n+1) H(+)(in) = a plastoquinol + NAD(+) + n H(+)(out). It carries out the reaction a plastoquinone + NADPH + (n+1) H(+)(in) = a plastoquinol + NADP(+) + n H(+)(out). In terms of biological role, NDH-1 shuttles electrons from an unknown electron donor, via FMN and iron-sulfur (Fe-S) centers, to quinones in the respiratory and/or the photosynthetic chain. The immediate electron acceptor for the enzyme in this species is believed to be plastoquinone. Couples the redox reaction to proton translocation, and thus conserves the redox energy in a proton gradient. Cyanobacterial NDH-1 also plays a role in inorganic carbon-concentration. The polypeptide is NAD(P)H-quinone oxidoreductase subunit O (Prochlorococcus marinus (strain MIT 9515)).